The chain runs to 173 residues: Invasion protein B homolog BruAb1_0366 (173 aa).

A signal peptide spans 1–23 (MKNYRAIGLAFTFTALSSLSAFA).

This sequence belongs to the IalB family.

This is Invasion protein B homolog BruAb1_0366 from Brucella abortus biovar 1 (strain 9-941).